The sequence spans 503 residues: AMP phosphorylase (503 aa).

Residues Gly168, 194-199 (SRAITS), and Thr203 contribute to the AMP site. Catalysis depends on Asp256, which acts as the Proton donor. Residues Ser264 and Lys288 each coordinate AMP.

This sequence belongs to the thymidine/pyrimidine-nucleoside phosphorylase family. Type 2 subfamily.

The enzyme catalyses AMP + phosphate = alpha-D-ribose 1,5-bisphosphate + adenine. The catalysed reaction is CMP + phosphate = cytosine + alpha-D-ribose 1,5-bisphosphate. It carries out the reaction UMP + phosphate = alpha-D-ribose 1,5-bisphosphate + uracil. Its function is as follows. Catalyzes the conversion of AMP and phosphate to adenine and ribose 1,5-bisphosphate (R15P). Exhibits phosphorylase activity toward CMP and UMP in addition to AMP. Functions in an archaeal AMP degradation pathway, together with R15P isomerase and RubisCO. The chain is AMP phosphorylase (deoA) from Pyrococcus abyssi (strain GE5 / Orsay).